Reading from the N-terminus, the 105-residue chain is Urease subunit beta (105 aa).

This sequence belongs to the urease beta subunit family. Heterotrimer of UreA (gamma), UreB (beta) and UreC (alpha) subunits. Three heterotrimers associate to form the active enzyme.

Its subcellular location is the cytoplasm. It carries out the reaction urea + 2 H2O + H(+) = hydrogencarbonate + 2 NH4(+). It participates in nitrogen metabolism; urea degradation; CO(2) and NH(3) from urea (urease route): step 1/1. The sequence is that of Urease subunit beta from Pseudomonas putida (strain GB-1).